We begin with the raw amino-acid sequence, 439 residues long: MSIDINWDTITGGTEGSARAEKIRAFIHDRFQQITLPRFIRSVHVHSFDFGSVPPEIEIKDICDPLPDFYEDDEDYPDEEGDEAENEAEDATPGAGDKLRDSSNPSNRPSRDSQSRERGRGAEGPVGRSIDHNQLRPSQPPARPSTKRSSLAPNELGSPFFPGALTPGIPGGTSNMNYFHLPLSAGLSGAATPLAAVAGAQLHSWLDNPHRPSTPTNMRLRHAASVNSLTLTPQSHPDPTSRPSSRHQHDEGKRQSFAGSDDGASPHGYTRTPSASPHRMHEKSPEDIQVVTHVQYSGNIKMSLTAEILLDYPMPSFVGIPLKLNITGLTFDGVAILAYIKKRAHFCFLSPDDADALVGSDIGFNGLQTDAQGQNPRPVQRPKIGGLLEHIKVESEIGGQGSGKQVLKNVGKVESFVLEQVRRIFEDEFVYPSFWTFLV.

The 439-residue stretch at 1–439 (MSIDINWDTI…VYPSFWTFLV (439 aa)) folds into the SMP-LTD domain. Disordered regions lie at residues 65-165 (PLPD…PGAL) and 229-284 (LTLT…HEKS). Residues 69–90 (FYEDDEDYPDEEGDEAENEAED) are compositionally biased toward acidic residues. The segment covering 109–121 (PSRDSQSRERGRG) has biased composition (basic and acidic residues). Residues 229 to 243 (LTLTPQSHPDPTSRP) show a composition bias toward polar residues.

It belongs to the MDM12 family. Component of the ER-mitochondria encounter structure (ERMES) or MDM complex, composed of MMM1, MDM10, mdm12 and MDM34. An MMM1 homodimer associates with one molecule of mdm12 on each side in a pairwise head-to-tail manner, and the SMP-LTD domains of MMM1 and mdm12 generate a continuous hydrophobic tunnel for phospholipid trafficking.

It is found in the mitochondrion outer membrane. The protein localises to the endoplasmic reticulum membrane. Its function is as follows. Component of the ERMES/MDM complex, which serves as a molecular tether to connect the endoplasmic reticulum (ER) and mitochondria. Components of this complex are involved in the control of mitochondrial shape and protein biogenesis, and function in nonvesicular lipid trafficking between the ER and mitochondria. mdm12 is required for the interaction of the ER-resident membrane protein MMM1 and the outer mitochondrial membrane-resident beta-barrel protein MDM10. The mdm12-MMM1 subcomplex functions in the major beta-barrel assembly pathway that is responsible for biogenesis of all mitochondrial outer membrane beta-barrel proteins, and acts in a late step after the SAM complex. The MDM10-mdm12-MMM1 subcomplex further acts in the TOM40-specific pathway after the action of the mdm12-MMM1 complex. Essential for establishing and maintaining the structure of mitochondria and maintenance of mtDNA nucleoids. This is Mitochondrial distribution and morphology protein 12 from Pyrenophora tritici-repentis (strain Pt-1C-BFP) (Wheat tan spot fungus).